The following is a 318-amino-acid chain: Methionyl-tRNA formyltransferase (318 aa).

112–115 lines the (6S)-5,6,7,8-tetrahydrofolate pocket; that stretch reads SILP.

This sequence belongs to the Fmt family.

The catalysed reaction is L-methionyl-tRNA(fMet) + (6R)-10-formyltetrahydrofolate = N-formyl-L-methionyl-tRNA(fMet) + (6S)-5,6,7,8-tetrahydrofolate + H(+). Attaches a formyl group to the free amino group of methionyl-tRNA(fMet). The formyl group appears to play a dual role in the initiator identity of N-formylmethionyl-tRNA by promoting its recognition by IF2 and preventing the misappropriation of this tRNA by the elongation apparatus. This Shewanella oneidensis (strain ATCC 700550 / JCM 31522 / CIP 106686 / LMG 19005 / NCIMB 14063 / MR-1) protein is Methionyl-tRNA formyltransferase.